The sequence spans 442 residues: Coiled-coil domain-containing protein 91 (442 aa).

Positions 1-16 (MDDDDFGGFEAAETFD) are GGA1-binding motif. Residues 1–27 (MDDDDFGGFEAAETFDGEQGGNQAVSP) form a disordered region. Residues Ser-43 and Ser-46 each carry the phosphoserine modification. The tract at residues 48–79 (ELILDHDRSSPSSGHLRSDAVISSPDDTRADS) is disordered. Coiled coils occupy residues 127–213 (GVHV…ALSI) and 248–409 (CEEL…RLDQ). The segment at 211-414 (LSIIVDEYKA…RRLDQVTRQR (204 aa)) is homodimerization.

As to quaternary structure, homodimer. Interacts with GGA1, GGA2 and AP1G1.

It is found in the membrane. The protein localises to the golgi apparatus. Its subcellular location is the trans-Golgi network membrane. The protein resides in the trans-Golgi network. In terms of biological role, involved in the regulation of membrane traffic through the trans-Golgi network (TGN). Functions in close cooperation with the GGAs in the sorting of hydrolases to lysosomes. The polypeptide is Coiled-coil domain-containing protein 91 (Ccdc91) (Rattus norvegicus (Rat)).